The primary structure comprises 232 residues: MTNITHDFAVVGTDTGVGKTVVTAGLVGWLRNAGHDAQAVKPAQTGYPPDDDAEFVATACGTDAAATCGPRLEPALAPEIAADVADERIDYTAIFETCAAALDRDGPGVIEGIGGLRVPLADGKEVVDLVSELDVPTILVARSGLGTLNHTALSVEALRRRDVFVSGIVLNQFEGETAAERTNPRVLEEMTGCPVYTMPPLSIAKPEDAVAGVCEHLPVEQVLSSVERDPIE.

An ATP-binding site is contributed by 16 to 21; it reads GVGKTV. Residue threonine 20 participates in Mg(2+) binding. Lysine 41 is a catalytic residue. Residue threonine 45 participates in substrate binding. ATP-binding positions include aspartate 52, 111-114, 171-172, 200-202, and glutamate 207; these read EGIG, NQ, and PLS. The Mg(2+) site is built by aspartate 52 and glutamate 111.

This sequence belongs to the dethiobiotin synthetase family. In terms of assembly, homodimer. The cofactor is Mg(2+).

The protein localises to the cytoplasm. The enzyme catalyses (7R,8S)-7,8-diammoniononanoate + CO2 + ATP = (4R,5S)-dethiobiotin + ADP + phosphate + 3 H(+). The catalysed reaction is (7R,8S)-8-amino-7-(carboxyamino)nonanoate + ATP = (4R,5S)-dethiobiotin + ADP + phosphate + H(+). It participates in cofactor biosynthesis; biotin biosynthesis; biotin from 7,8-diaminononanoate: step 1/2. Its function is as follows. Catalyzes a mechanistically unusual reaction, the ATP-dependent insertion of CO2 between the N7 and N8 nitrogen atoms of 7,8-diaminopelargonic acid (DAPA, also called 7,8-diammoniononanoate) to form a ureido ring. This archaea does not encode bioA (which catalyzes the formation of the precursor for this reaction in the cannonical pathway), instead it encodes bioU, which replaces bioA and also performs the first half of the cannonical BioD reaction. Thus in this archaea BioD has a different substrate. This is ATP-dependent dethiobiotin synthetase BioD from Haloferax mediterranei (strain ATCC 33500 / DSM 1411 / JCM 8866 / NBRC 14739 / NCIMB 2177 / R-4) (Halobacterium mediterranei).